Here is a 398-residue protein sequence, read N- to C-terminus: GATA transcription factor 21 (398 aa).

Positions Q20–S51 are disordered. The segment covering L32–Q42 has biased composition (basic residues). Residues P109–K116 carry the Nuclear localization signal motif. Residues K122–K144 form a disordered region. Residues N226–V280 form a GATA-type zinc finger. The segment at L289–I353 is disordered. Residues L291–S302 are compositionally biased toward basic residues. A compositionally biased stretch (low complexity) spans S343–I353.

This sequence belongs to the type IV zinc-finger family. Class B subfamily. As to quaternary structure, interacts with SNL1. Forms heterodimers with GATA18. Expressed predominantly in leaves, and barely in stems, flowers and siliques.

It localises to the nucleus. Functionally, transcriptional regulator that specifically binds 5'-GATA-3' or 5'-GAT-3' motifs within gene promoters. Involved in the modulation of chloroplast development, growth and division in a cytokinin-dependent manner. Repressor of the gibberellic acid (GA) signaling pathway that represses flowering and modulates greening, in a SOC1-dependent manner. Prevents the accumulation of SOC1 during flowering. Promotes chlorophyll biosynthesis throughout the plant, by regulating chlorophyll biosynthetic genes (e.g. HEMA1 and GUN4) and chloroplast localized glutamate synthase (e.g. GLU1). Involved in the regulation of sugar-sensing genes (e.g. HXK1, HXK2, STP13 and PLT6). Regulator of germination, senescence, elongation growth and flowering time. Also influences leaf starch content. The chain is GATA transcription factor 21 from Arabidopsis thaliana (Mouse-ear cress).